Consider the following 196-residue polypeptide: Nucleoid occlusion factor SlmA (196 aa).

In terms of domain architecture, HTH tetR-type spans Thr-7 to Ile-68. Residues Thr-31 to Phe-50 constitute a DNA-binding region (H-T-H motif). Positions Glu-115–Lys-142 form a coiled coil.

The protein belongs to the nucleoid occlusion factor SlmA family. In terms of assembly, homodimer. Interacts with FtsZ.

It is found in the cytoplasm. Its subcellular location is the nucleoid. Required for nucleoid occlusion (NO) phenomenon, which prevents Z-ring formation and cell division over the nucleoid. Acts as a DNA-associated cell division inhibitor that binds simultaneously chromosomal DNA and FtsZ, and disrupts the assembly of FtsZ polymers. SlmA-DNA-binding sequences (SBS) are dispersed on non-Ter regions of the chromosome, preventing FtsZ polymerization at these regions. The protein is Nucleoid occlusion factor SlmA of Photobacterium profundum (strain SS9).